The following is a 255-amino-acid chain: Ditrans,polycis-undecaprenyl-diphosphate synthase ((2E,6E)-farnesyl-diphosphate specific) (255 aa).

Asp-21 is a catalytic residue. Asp-21 is a binding site for Mg(2+). Substrate is bound by residues Gly-22–Arg-25, Trp-26, Arg-34, His-38, and Ser-66–Glu-68. The active-site Proton acceptor is Asn-69. Residues Trp-70, Arg-72, Arg-189, and Arg-195–Ser-197 contribute to the substrate site. Glu-208 lines the Mg(2+) pocket.

This sequence belongs to the UPP synthase family. Homodimer. Requires Mg(2+) as cofactor.

The enzyme catalyses 8 isopentenyl diphosphate + (2E,6E)-farnesyl diphosphate = di-trans,octa-cis-undecaprenyl diphosphate + 8 diphosphate. Functionally, catalyzes the sequential condensation of isopentenyl diphosphate (IPP) with (2E,6E)-farnesyl diphosphate (E,E-FPP) to yield (2Z,6Z,10Z,14Z,18Z,22Z,26Z,30Z,34E,38E)-undecaprenyl diphosphate (di-trans,octa-cis-UPP). UPP is the precursor of glycosyl carrier lipid in the biosynthesis of bacterial cell wall polysaccharide components such as peptidoglycan and lipopolysaccharide. The polypeptide is Ditrans,polycis-undecaprenyl-diphosphate synthase ((2E,6E)-farnesyl-diphosphate specific) (Xylella fastidiosa (strain Temecula1 / ATCC 700964)).